The sequence spans 156 residues: UPF0336 protein SACE_6876 (156 aa).

The region spanning 8 to 128 (IGREYPPTPA…DFLTVRAEIT (121 aa)) is the MaoC-like domain.

This sequence belongs to the UPF0336 family.

This is UPF0336 protein SACE_6876 from Saccharopolyspora erythraea (strain ATCC 11635 / DSM 40517 / JCM 4748 / NBRC 13426 / NCIMB 8594 / NRRL 2338).